The following is a 420-amino-acid chain: Protein Rv2184c (420 aa).

The protein belongs to the arsA ATPase family.

The chain is Protein Rv2184c from Mycobacterium tuberculosis (strain ATCC 25618 / H37Rv).